A 365-amino-acid polypeptide reads, in one-letter code: MAKLSLRNVQKHYAGLQVVHGIDMEIGDGEFIVIVGPSGCGKSTLLRMVAGLEAITGGEVWIGDRVVNELEPAERDIAMVFQNYALYPHMTVFDNMAYGLKIRGLPKSEILARVQQAAGILELGKLLERKPRQLSGGQRQRVAMGRAIVREPAVFLFDEPLSNLDAKLRVQMRLELKELHRRLRTTSLYVTHDQVEAMTLADRMMVLSGGRVEQIGTPLEVYARPASTFVAGFIGSPPMNLVPVSRHAGEGAQIRVDGAQAGDAPATLGHLPMGLHLPEHALMGLRPEHIEPCAADRAIAFVEVRLVEALGADAFAYGALAGHPVVVRLDPHASVKAGDRLPITASADHLHWFDPQTTRRIEALA.

The ABC transporter domain maps to 4–234 (LSLRNVQKHY…PASTFVAGFI (231 aa)). 36–43 (GPSGCGKS) contributes to the ATP binding site.

It belongs to the ABC transporter superfamily. sn-glycerol-3-phosphate importer (TC 3.A.1.1.3) family. As to quaternary structure, the complex is composed of two ATP-binding proteins (UgpC), two transmembrane proteins (UgpA and UgpE) and a solute-binding protein (UgpB).

It is found in the cell inner membrane. It catalyses the reaction sn-glycerol 3-phosphate(out) + ATP + H2O = sn-glycerol 3-phosphate(in) + ADP + phosphate + H(+). Part of the ABC transporter complex UgpBAEC involved in sn-glycerol-3-phosphate (G3P) import. Responsible for energy coupling to the transport system. This Ralstonia nicotianae (strain ATCC BAA-1114 / GMI1000) (Ralstonia solanacearum) protein is sn-glycerol-3-phosphate import ATP-binding protein UgpC.